A 434-amino-acid chain; its full sequence is ATP-dependent RNA helicase uap56 (434 aa).

Positions 1-43 (MASAQEDLIDYEEEEELVQDQPAQEITPAADTAENGEKSDKKG) are disordered. Over residues 7-18 (DLIDYEEEEELV) the composition is skewed to acidic residues. Positions 51-79 (TGFRDFLLKPELLRAITDSGFEHPSEVQQ) match the Q motif motif. The Helicase ATP-binding domain occupies 82–257 (IPQSILGTDV…KKFMQNPLEI (176 aa)). 95–102 (AKSGMGKT) contacts ATP. The DECD box signature appears at 204–207 (DECD). Residues 269–430 (GLQQHYVKLE…ELPDEIDVGS (162 aa)) enclose the Helicase C-terminal domain.

The protein belongs to the DEAD box helicase family. DECD subfamily. In terms of assembly, interacts with mlo3 and rae1.

The protein resides in the nucleus. It carries out the reaction ATP + H2O = ADP + phosphate + H(+). Functionally, ATP-binding RNA helicase involved in transcription elongation and required for the export of mRNA out of the nucleus. SUB2 also plays a role in pre-mRNA splicing and spliceosome assembly. May be involved in rDNA and telomeric silencing, and maintenance of genome integrity. Links the mRNA adapter mlo3 to rae1 for targeting mRNA-protein complex to the proteins of the nucleoporin complex (NPC). This chain is ATP-dependent RNA helicase uap56 (uap56), found in Schizosaccharomyces pombe (strain 972 / ATCC 24843) (Fission yeast).